The chain runs to 249 residues: Methylthioribulose-1-phosphate dehydratase (249 aa).

Zn(2+) contacts are provided by His-103 and His-105.

This sequence belongs to the aldolase class II family. MtnB subfamily. The cofactor is Zn(2+).

The catalysed reaction is 5-(methylsulfanyl)-D-ribulose 1-phosphate = 5-methylsulfanyl-2,3-dioxopentyl phosphate + H2O. The protein operates within amino-acid biosynthesis; L-methionine biosynthesis via salvage pathway; L-methionine from S-methyl-5-thio-alpha-D-ribose 1-phosphate: step 2/6. In terms of biological role, catalyzes the dehydration of methylthioribulose-1-phosphate (MTRu-1-P) into 2,3-diketo-5-methylthiopentyl-1-phosphate (DK-MTP-1-P). This chain is Methylthioribulose-1-phosphate dehydratase, found in Leptospira interrogans serogroup Icterohaemorrhagiae serovar Lai (strain 56601).